We begin with the raw amino-acid sequence, 297 residues long: Light-independent protochlorophyllide reductase iron-sulfur ATP-binding protein (297 aa).

Residues glycine 41 to threonine 46 and lysine 70 contribute to the ATP site. Residue serine 45 participates in Mg(2+) binding. Residues cysteine 126 and cysteine 160 each contribute to the [4Fe-4S] cluster site. Residues asparagine 211–arginine 212 and proline 235–leucine 237 contribute to the ATP site.

The protein belongs to the NifH/BchL/ChlL family. In terms of assembly, homodimer. Protochlorophyllide reductase is composed of three subunits; BchL, BchN and BchB. It depends on [4Fe-4S] cluster as a cofactor.

It carries out the reaction chlorophyllide a + oxidized 2[4Fe-4S]-[ferredoxin] + 2 ADP + 2 phosphate = protochlorophyllide a + reduced 2[4Fe-4S]-[ferredoxin] + 2 ATP + 2 H2O. Its pathway is porphyrin-containing compound metabolism; bacteriochlorophyll biosynthesis (light-independent). In terms of biological role, component of the dark-operative protochlorophyllide reductase (DPOR) that uses Mg-ATP and reduced ferredoxin to reduce ring D of protochlorophyllide (Pchlide) to form chlorophyllide a (Chlide). This reaction is light-independent. The L component serves as a unique electron donor to the NB-component of the complex, and binds Mg-ATP. In Methylorubrum populi (strain ATCC BAA-705 / NCIMB 13946 / BJ001) (Methylobacterium populi), this protein is Light-independent protochlorophyllide reductase iron-sulfur ATP-binding protein.